The chain runs to 311 residues: ATP synthase gamma chain (311 aa).

A disulfide bridge connects residues Cys-67 and Cys-138.

It belongs to the ATPase gamma chain family. As to quaternary structure, F-type ATPases have 2 components, CF(1) - the catalytic core - and CF(0) - the membrane proton channel. CF(1) has five subunits: alpha(3), beta(3), gamma(1), delta(1), epsilon(1). CF(0) has three main subunits: a, b and c.

It is found in the cellular thylakoid membrane. With respect to regulation, thiol-modulation by raising the activation threshold of the enzyme upon oxidation of the cysteines, thereby preventing wasteful ATP-hydrolysis. Functionally, produces ATP from ADP in the presence of a proton gradient across the membrane. The gamma chain is believed to be important in regulating ATPase activity and the flow of protons through the CF(0) complex. This chain is ATP synthase gamma chain (atpG), found in Arthrospira platensis (Spirulina platensis).